The following is a 333-amino-acid chain: Anthranilate phosphoribosyltransferase (333 aa).

Residues Gly80, 83–84 (GD), Ser88, 90–93 (NIST), 108–116 (KHGNRSVSS), and Ser120 each bind 5-phospho-alpha-D-ribose 1-diphosphate. Gly80 serves as a coordination point for anthranilate. Ser92 contacts Mg(2+). Asn111 contributes to the anthranilate binding site. Anthranilate is bound at residue Arg166. The Mg(2+) site is built by Asp224 and Glu225.

Belongs to the anthranilate phosphoribosyltransferase family. As to quaternary structure, homodimer. The cofactor is Mg(2+).

The enzyme catalyses N-(5-phospho-beta-D-ribosyl)anthranilate + diphosphate = 5-phospho-alpha-D-ribose 1-diphosphate + anthranilate. It participates in amino-acid biosynthesis; L-tryptophan biosynthesis; L-tryptophan from chorismate: step 2/5. Catalyzes the transfer of the phosphoribosyl group of 5-phosphorylribose-1-pyrophosphate (PRPP) to anthranilate to yield N-(5'-phosphoribosyl)-anthranilate (PRA). This Yersinia pseudotuberculosis serotype O:1b (strain IP 31758) protein is Anthranilate phosphoribosyltransferase.